A 1351-amino-acid chain; its full sequence is uncharacterized protein (1351 aa).

Positions 1–17 (MSKKDSKNSPKKSKDTN) are enriched in basic and acidic residues. The segment at 1 to 31 (MSKKDSKNSPKKSKDTNSDESSSSNAETSSD) is disordered. Positions 19–31 (DESSSSNAETSSD) are enriched in low complexity.

This is an uncharacterized protein from Acanthamoeba polyphaga mimivirus (APMV).